The primary structure comprises 445 residues: UDP-N-acetylmuramoylalanine--D-glutamate ligase (445 aa).

117–123 (GSNGKTT) contributes to the ATP binding site.

The protein belongs to the MurCDEF family.

It is found in the cytoplasm. It carries out the reaction UDP-N-acetyl-alpha-D-muramoyl-L-alanine + D-glutamate + ATP = UDP-N-acetyl-alpha-D-muramoyl-L-alanyl-D-glutamate + ADP + phosphate + H(+). It functions in the pathway cell wall biogenesis; peptidoglycan biosynthesis. Cell wall formation. Catalyzes the addition of glutamate to the nucleotide precursor UDP-N-acetylmuramoyl-L-alanine (UMA). This is UDP-N-acetylmuramoylalanine--D-glutamate ligase from Neisseria meningitidis serogroup C (strain 053442).